We begin with the raw amino-acid sequence, 152 residues long: MCSLPMARYYIIKYADQKALYTRDGQLLVGDPVADNCCAEKICILPNRGLARTKVPIFLGIQGGSRCLACVETEEGPSLQLEDVNIEELYKGGEEATRFTFFQSSSGSAFRLEAAAWPGWFLCGPAEPQQPVQLTKESEPSARTKFYFEQSW.

It belongs to the IL-1 family. As to quaternary structure, interacts with cargo receptor TMED10; the interaction mediates the translocation from the cytoplasm into the ERGIC (endoplasmic reticulum-Golgi intermediate compartment) and thereby secretion. Expressed in fetal skin, spleen and tonsil. Expressed mostly in the basal epithelia of skin and in proliferating B-cells of the tonsil.

Its subcellular location is the cytoplasm. The protein localises to the secreted. Functionally, cytokine with immunomodulatory activity. Alone, does not induce cytokine production, but reduces IL22 and IL17A production by T-cells in response to heat-killed Candida albicans. Reduces IL36G-induced production of IL8 by peripheral blood mononuclear cells. Increases IL6 production by dendritic cells stimulated by bacterial lipopolysaccharides (LPS). Ligand for IL-36R/IL1RL2. The protein is Interleukin-1 family member 10 of Homo sapiens (Human).